The primary structure comprises 162 residues: Nitrogen regulatory protein (162 aa).

In terms of domain architecture, PTS EIIA type-2 spans Asn12 to Ala156. Residue His73 is the Tele-phosphohistidine intermediate of the active site.

The protein resides in the cytoplasm. Its function is as follows. Seems to have a role in regulating nitrogen assimilation. In Klebsiella oxytoca, this protein is Nitrogen regulatory protein (ptsN).